The primary structure comprises 155 residues: 2-C-methyl-D-erythritol 2,4-cyclodiphosphate synthase (155 aa).

The a divalent metal cation site is built by aspartate 8 and histidine 10. 4-CDP-2-C-methyl-D-erythritol 2-phosphate-binding positions include 8 to 10 (DVH) and 34 to 35 (HS). Histidine 42 provides a ligand contact to a divalent metal cation. 4-CDP-2-C-methyl-D-erythritol 2-phosphate-binding positions include 56-58 (DIG), 61-65 (FPDSD), 100-106 (AQKPKML), 132-135 (TTEE), phenylalanine 139, and lysine 142.

The protein belongs to the IspF family. Homotrimer. It depends on a divalent metal cation as a cofactor.

It carries out the reaction 4-CDP-2-C-methyl-D-erythritol 2-phosphate = 2-C-methyl-D-erythritol 2,4-cyclic diphosphate + CMP. The protein operates within isoprenoid biosynthesis; isopentenyl diphosphate biosynthesis via DXP pathway; isopentenyl diphosphate from 1-deoxy-D-xylulose 5-phosphate: step 4/6. Its function is as follows. Involved in the biosynthesis of isopentenyl diphosphate (IPP) and dimethylallyl diphosphate (DMAPP), two major building blocks of isoprenoid compounds. Catalyzes the conversion of 4-diphosphocytidyl-2-C-methyl-D-erythritol 2-phosphate (CDP-ME2P) to 2-C-methyl-D-erythritol 2,4-cyclodiphosphate (ME-CPP) with a corresponding release of cytidine 5-monophosphate (CMP). This is 2-C-methyl-D-erythritol 2,4-cyclodiphosphate synthase from Clostridium botulinum (strain 657 / Type Ba4).